Here is a 168-residue protein sequence, read N- to C-terminus: Disulfide bond formation protein B (168 aa).

Residues 1 to 11 lie on the Cytoplasmic side of the membrane; that stretch reads MSNPMRPVRSI. The helical transmembrane segment at 12–28 threads the bilayer; it reads LLAIFTGCAGLIGYALY. The Periplasmic portion of the chain corresponds to 29–46; that stretch reads LQLVENLLPCPLCVVQRM. Residues cysteine 38 and cysteine 41 are joined by a disulfide bond. Residues 47-63 form a helical membrane-spanning segment; sequence AYWLIGLTALAGFFHTP. At 64 to 69 the chain is on the cytoplasmic side; the sequence is ETTGRR. A helical transmembrane segment spans residues 70 to 87; the sequence is IYAGLMAVFAFTGGLVAL. The Periplasmic portion of the chain corresponds to 88-143; it reads RQAWLVRYPEAFECGISPEEAFLNALPLARWWPVMFEANGDCADVTWKFASLTLPD. A disulfide bond links cysteine 101 and cysteine 129. Residues 144–162 form a helical membrane-spanning segment; that stretch reads WSAIFFMILAALSIYVLLV. Residues 163–168 lie on the Cytoplasmic side of the membrane; sequence RENQRE.

It belongs to the DsbB family.

The protein localises to the cell inner membrane. Functionally, required for disulfide bond formation in some periplasmic proteins. Acts by oxidizing the DsbA protein. The chain is Disulfide bond formation protein B from Nitrosospira multiformis (strain ATCC 25196 / NCIMB 11849 / C 71).